We begin with the raw amino-acid sequence, 612 residues long: ETS-related transcription factor Elf-1 (612 aa).

Phosphoserine is present on residues Ser110, Ser163, Ser167, and Ser168. Residues 156 to 169 are compositionally biased toward polar residues; the sequence is VQETNADSPGASSP. Positions 156 to 199 are disordered; sequence VQETNADSPGASSPEQRKRKKGRKTKPPRPDSPTTTPNISVKKK. The segment covering 172–182 has biased composition (basic residues); the sequence is RKRKKGRKTKP. Residue Ser187 is modified to Phosphoserine. Residue Thr190 is modified to Phosphothreonine. The segment at residues 208-290 is a DNA-binding region (ETS); that stretch reads IYLWEFLLAL…EGQRLVYQFK (83 aa). Positions 300 to 361 are disordered; sequence DDEDPSSSIE…AANPKDPVEV (62 aa). Residues 305–322 are compositionally biased toward low complexity; the sequence is SSSIESSDQSLSSTTASS. The span at 323-335 shows a compositional bias: polar residues; the sequence is RNQANRSRVSSSP. Ser431 bears the Phosphoserine mark. A compositionally biased stretch (basic and acidic residues) spans 562–577; the sequence is EVEKKAEDDLNEDAEK. Positions 562–586 are disordered; it reads EVEKKAEDDLNEDAEKSAQQPQPYV.

It belongs to the ETS family. In terms of assembly, binds to the underphosphorylated form of RB. May interact with other transcription factors in order to regulate specific genes. Interacts with RUNX1. Interacts with SP1; the interaction is inhibited by glycosylation of SP1. In terms of tissue distribution, predominantly found in hematopoietic cells. Detected in other cell types such as fibroblasts.

Its subcellular location is the nucleus. Its function is as follows. Transcription factor that activates the LYN and BLK promoters. The polypeptide is ETS-related transcription factor Elf-1 (Elf1) (Mus musculus (Mouse)).